A 285-amino-acid chain; its full sequence is MAEVEHQDTVNHRVLVSLKEAARIIGAQGMTIQKIRESSKVKIGISPHERGCSDRILSCSGSAQGVANAIGDVVEVLNQDDSEPETHSYKPLNFILPAPSATEIQDPESVKRIGNLRLIVSNSQVSSIIGTQGSRIKSLIEKHGVKVVASKNFLPDSQDRVVEIQGFPGAIASCLVDISEILAAEPKPSHEKQYYPHTKSQEEGSVTKDVAIPVEYVGALLGRGGNRVSSLRKYTKTKVIVSDEPDEENNRVFTITGNNQNSVKLAETMLLKNLETEKQRREDKV.

KH domains lie at 9-73 (TVNH…IGDV), 113-178 (IGNL…LVDI), and 205-270 (SVTK…ETML).

It belongs to the HEK2 family. As to quaternary structure, binds RNA.

Its subcellular location is the cytoplasm. It localises to the P-body. The protein localises to the nucleus. It is found in the chromosome. The protein resides in the telomere. Functionally, RNA-binding protein involved in the correct localization of transcripts in the cell. RNA localization is a widespread mechanism for achieving localized protein synthesis. Involved in structural and functional organization of telomeric chromatin and regulates silencing at the HMR locus. In Lachancea thermotolerans (strain ATCC 56472 / CBS 6340 / NRRL Y-8284) (Yeast), this protein is Heterogeneous nuclear rnp K-like protein 2 (HEK2).